The sequence spans 544 residues: MSSTQGRKRSRLACETCRELKRKCDGNQPCGACVRFEYDCIYNKQTNTNKRRKTVEQDKEAPLPSPPVHVDKDARPYVTSPHHLQSLEANSGAAFFRRLALRLDPKNAPRMHTFSWNAFLGARRTSQVPVSRPVTEMLSQEGMESLSEIYFEKLDPIYGFIDRDWISRITQNRWSGLICDESEDAVLCGIAAIACLFSEVEPLPLELDLIESARFILEQNMSDTPSVTGVTGWLLRVIYLRTAETPHTAWMASSILMHMLEAAGLHCEPSEESVFQVAEEKVDSELRRRLFAVSAHLNIWISFDMGRSRTILCNSTLEMPSTREGDYTIEIMELLPYSTDLDPHKTHDAAELEASLSTVLKRVHSVPPSIMAQCNLTLCLCRRLQSMNTSFTGKTLEQILSITQRGIEAAQAIIDARAPWHQMANVPFQIICLLLAIDTRESLAQLNDAMQCLNNIATVYNTNATKEALNTASLLILMQQRRKEKCASNLSNIVKSFPILPLSETQVEAPLQQMDDMRWFNNLAGELSGFDYSDLDRFLSQSMF.

The segment at residues 14–40 (CETCRELKRKCDGNQPCGACVRFEYDC) is a DNA-binding region (zn(2)-C6 fungal-type). A disordered region spans residues 50-71 (KRRKTVEQDKEAPLPSPPVHVD).

The protein resides in the nucleus. May act as a transcriptional repressor of multidrug resistance genes. The polypeptide is Protein RDR1 (RDR1) (Gibberella zeae (strain ATCC MYA-4620 / CBS 123657 / FGSC 9075 / NRRL 31084 / PH-1) (Wheat head blight fungus)).